Here is a 486-residue protein sequence, read N- to C-terminus: N-succinylglutamate 5-semialdehyde dehydrogenase (486 aa).

220–225 (GSSRTG) contacts NAD(+). Residues glutamate 243 and cysteine 277 contribute to the active site.

It belongs to the aldehyde dehydrogenase family. AstD subfamily.

The catalysed reaction is N-succinyl-L-glutamate 5-semialdehyde + NAD(+) + H2O = N-succinyl-L-glutamate + NADH + 2 H(+). Its pathway is amino-acid degradation; L-arginine degradation via AST pathway; L-glutamate and succinate from L-arginine: step 4/5. In terms of biological role, catalyzes the NAD-dependent reduction of succinylglutamate semialdehyde into succinylglutamate. The protein is N-succinylglutamate 5-semialdehyde dehydrogenase of Shewanella halifaxensis (strain HAW-EB4).